A 139-amino-acid polypeptide reads, in one-letter code: Large ribosomal subunit protein uL16 (139 aa).

The span at 1–20 shows a compositional bias: basic residues; it reads MLMPRRVKHRKQHHPTRRGA. The tract at residues 1–24 is disordered; the sequence is MLMPRRVKHRKQHHPTRRGAAKGG.

Belongs to the universal ribosomal protein uL16 family. As to quaternary structure, part of the 50S ribosomal subunit.

Its function is as follows. Binds 23S rRNA and is also seen to make contacts with the A and possibly P site tRNAs. This is Large ribosomal subunit protein uL16 from Nocardioides sp. (strain ATCC BAA-499 / JS614).